The primary structure comprises 400 residues: ATP-dependent rRNA helicase RRP3 (400 aa).

The short motif at 1 to 29 is the Q motif element; that stretch reads MEFGDLRIDESLIKTCQEKGITRPTEVQR. The 171-residue stretch at 32–202 folds into the Helicase ATP-binding domain; sequence IPAVLGGGDV…SSILKRPKTI (171 aa). Residue 45–52 participates in ATP binding; it reads SQTGSGKT. Residues 150-153 carry the DEAD box motif; the sequence is DEAD. The Helicase C-terminal domain maps to 229 to 373; that stretch reads ALVELLEMSQ…EFKMMKKNFG (145 aa).

This sequence belongs to the DEAD box helicase family. DDX47/RRP3 subfamily. Interacts with the SSU processome.

Its subcellular location is the nucleus. The catalysed reaction is ATP + H2O = ADP + phosphate + H(+). In terms of biological role, ATP-dependent rRNA helicase required for pre-ribosomal RNA processing. Involved in the maturation of the 35S-pre-rRNA and to its cleavage to mature 18S rRNA. The polypeptide is ATP-dependent rRNA helicase RRP3 (Encephalitozoon cuniculi (strain GB-M1) (Microsporidian parasite)).